The chain runs to 166 residues: Sec-independent protein translocase protein TatB (166 aa).

Residues 1 to 21 (MIDIAFSKLAIIGVAALVFIG) traverse the membrane as a helical segment. The disordered stretch occupies residues 85-146 (DSSLHSAWDE…SGQKSRVISG (62 aa)).

This sequence belongs to the TatB family. In terms of assembly, the Tat system comprises two distinct complexes: a TatABC complex, containing multiple copies of TatA, TatB and TatC subunits, and a separate TatA complex, containing only TatA subunits. Substrates initially bind to the TatABC complex, which probably triggers association of the separate TatA complex to form the active translocon.

The protein localises to the cell inner membrane. In terms of biological role, part of the twin-arginine translocation (Tat) system that transports large folded proteins containing a characteristic twin-arginine motif in their signal peptide across membranes. Together with TatC, TatB is part of a receptor directly interacting with Tat signal peptides. TatB may form an oligomeric binding site that transiently accommodates folded Tat precursor proteins before their translocation. The polypeptide is Sec-independent protein translocase protein TatB (Herminiimonas arsenicoxydans).